The sequence spans 301 residues: Type II restriction enzyme BslI subunit beta (301 aa).

The segment at 62–82 adopts a CHC2-type zinc-finger fold; the sequence is CPDGHTKWNQNLTKEMTCSEC.

As to quaternary structure, heterotetramer of two alpha and two beta subunits. The alpha subunit is believed to be responsible for DNA recognition, while the beta subunit is thought to mediate cleavage. It depends on Zn(2+) as a cofactor.

It carries out the reaction Endonucleolytic cleavage of DNA to give specific double-stranded fragments with terminal 5'-phosphates.. Functionally, a P subtype restriction enzyme that recognizes the double-stranded sequence 5'-CCN(7)GG-3' and cleaves after N-7. This chain is Type II restriction enzyme BslI subunit beta, found in Bacillus sp. (strain NEB-606).